Consider the following 211-residue polypeptide: Transcription factor E (211 aa).

Residues 10-130 (GNPAIYQYLL…LWLMRMDHMN (121 aa)) form the HTH TFE/IIEalpha-type domain.

Belongs to the TFE family. Monomer. Interaction with RNA polymerase subunits RpoF and RpoE is necessary for Tfe stimulatory transcription activity. Able to interact with Tbp and RNA polymerase in the absence of DNA promoter. Interacts both with the preinitiation and elongation complexes.

Functionally, transcription factor that plays a role in the activation of archaeal genes transcribed by RNA polymerase. Facilitates transcription initiation by enhancing TATA-box recognition by TATA-box-binding protein (Tbp), and transcription factor B (Tfb) and RNA polymerase recruitment. Not absolutely required for transcription in vitro, but particularly important in cases where Tbp or Tfb function is not optimal. It dynamically alters the nucleic acid-binding properties of RNA polymerases by stabilizing the initiation complex and destabilizing elongation complexes. Seems to translocate with the RNA polymerase following initiation and acts by binding to the non template strand of the transcription bubble in elongation complexes. This is Transcription factor E from Methanocorpusculum labreanum (strain ATCC 43576 / DSM 4855 / Z).